Here is an 897-residue protein sequence, read N- to C-terminus: Valine--tRNA ligase (897 aa).

The short motif at 46-56 is the 'HIGH' region element; sequence PNVTGSLHMGH. The short motif at 532–536 is the 'KMSKS' region element; sequence KMSKT. Lys-535 serves as a coordination point for ATP. A coiled-coil region spans residues 839–897; it reads LRRSLEKLDKESGVLAARLDNASYLANAPAELVTESRAKLAEQRAQAAILAEQLARLEN.

This sequence belongs to the class-I aminoacyl-tRNA synthetase family. ValS type 1 subfamily. In terms of assembly, monomer.

The protein resides in the cytoplasm. The enzyme catalyses tRNA(Val) + L-valine + ATP = L-valyl-tRNA(Val) + AMP + diphosphate. Functionally, catalyzes the attachment of valine to tRNA(Val). As ValRS can inadvertently accommodate and process structurally similar amino acids such as threonine, to avoid such errors, it has a 'posttransfer' editing activity that hydrolyzes mischarged Thr-tRNA(Val) in a tRNA-dependent manner. The protein is Valine--tRNA ligase of Gloeobacter violaceus (strain ATCC 29082 / PCC 7421).